We begin with the raw amino-acid sequence, 516 residues long: 3-ketoacyl-CoA synthase 4 (516 aa).

Transmembrane regions (helical) follow at residues L48–A68 and L87–T107. The region spanning Y104–L393 is the FAE domain. Residues C248, H327, H411, H415, H444, and N448 contribute to the active site.

This sequence belongs to the thiolase-like superfamily. Chalcone/stilbene synthases family. As to expression, expressed at low levels in siliques, flowers, leaves and stems.

The protein resides in the membrane. It carries out the reaction a very-long-chain acyl-CoA + malonyl-CoA + H(+) = a very-long-chain 3-oxoacyl-CoA + CO2 + CoA. The protein operates within lipid metabolism; fatty acid biosynthesis. This is 3-ketoacyl-CoA synthase 4 from Arabidopsis thaliana (Mouse-ear cress).